Consider the following 399-residue polypeptide: Argininosuccinate synthase (399 aa).

ATP is bound by residues 10–18 (AYSGGVDTS) and Ala38. Tyr89 lines the L-citrulline pocket. ATP is bound at residue Gly119. L-aspartate contacts are provided by Thr121, Asn125, and Asp126. Asn125 lines the L-citrulline pocket. The L-citrulline site is built by Arg129, Ser177, Ser186, Glu262, and Tyr274.

Belongs to the argininosuccinate synthase family. Type 1 subfamily. Homotetramer.

It is found in the cytoplasm. The enzyme catalyses L-citrulline + L-aspartate + ATP = 2-(N(omega)-L-arginino)succinate + AMP + diphosphate + H(+). Its pathway is amino-acid biosynthesis; L-arginine biosynthesis; L-arginine from L-ornithine and carbamoyl phosphate: step 2/3. This is Argininosuccinate synthase from Rippkaea orientalis (strain PCC 8801 / RF-1) (Cyanothece sp. (strain PCC 8801)).